The sequence spans 274 residues: Type III pantothenate kinase (274 aa).

An ATP-binding site is contributed by 6–13; it reads DVRNTHTV. 109-112 lines the substrate pocket; that stretch reads GADR. Aspartate 111 serves as the catalytic Proton acceptor. Aspartate 131 provides a ligand contact to K(+). Serine 134 contributes to the ATP binding site. Threonine 186 is a binding site for substrate.

The protein belongs to the type III pantothenate kinase family. Homodimer. NH4(+) is required as a cofactor. The cofactor is K(+).

Its subcellular location is the cytoplasm. It carries out the reaction (R)-pantothenate + ATP = (R)-4'-phosphopantothenate + ADP + H(+). It functions in the pathway cofactor biosynthesis; coenzyme A biosynthesis; CoA from (R)-pantothenate: step 1/5. Catalyzes the phosphorylation of pantothenate (Pan), the first step in CoA biosynthesis. The chain is Type III pantothenate kinase from Mycobacterium leprae (strain Br4923).